The primary structure comprises 320 residues: Ribose-phosphate pyrophosphokinase 3 (320 aa).

Positions 131, 133, 142, and 146 each coordinate Mg(2+).

The protein belongs to the ribose-phosphate pyrophosphokinase family.

The protein localises to the cytoplasm. The catalysed reaction is D-ribose 5-phosphate + ATP = 5-phospho-alpha-D-ribose 1-diphosphate + AMP + H(+). It participates in metabolic intermediate biosynthesis; 5-phospho-alpha-D-ribose 1-diphosphate biosynthesis; 5-phospho-alpha-D-ribose 1-diphosphate from D-ribose 5-phosphate (route I): step 1/1. Its function is as follows. 5-phosphoribose 1-diphosphate synthase involved in nucleotide, histidine, and tryptophan biosynthesis. Active in heteromultimeric complexes with other 5-phosphoribose 1-diphosphate synthases (PRS2, PRS3, PRS4 and PRS5). This Saccharomyces cerevisiae (strain ATCC 204508 / S288c) (Baker's yeast) protein is Ribose-phosphate pyrophosphokinase 3 (PRS3).